The following is a 409-amino-acid chain: Broad specificity amino-acid racemase (409 aa).

An N-terminal signal peptide occupies residues 1-23 (MPFSRTLLALSLGMALLQNPAFA). Cysteine 70 and cysteine 96 are disulfide-bonded. Residue lysine 74 is the Proton acceptor of the active site. Lysine 74 is modified (N6-(pyridoxal phosphate)lysine). Arginine 173 provides a ligand contact to substrate. The active-site Proton acceptor is tyrosine 300. Methionine 348 is a substrate binding site.

Belongs to the alanine racemase family. Bsr subfamily. In terms of assembly, homodimer. Requires pyridoxal 5'-phosphate as cofactor.

The protein resides in the periplasm. It carries out the reaction an L-alpha-amino acid = a D-alpha-amino acid. The enzyme catalyses L-lysine = D-lysine. It catalyses the reaction L-arginine = D-arginine. The catalysed reaction is L-ornithine = D-ornithine. It carries out the reaction L-alanine = D-alanine. The enzyme catalyses L-methionine = D-methionine. Its function is as follows. Amino-acid racemase able to utilize a broad range of substrates. Is mostly active with lysine and arginine and, to a lesser extent, with ornithine, whereas is about 10 times less active with alanine, methionine and ethionine. With phenylalanine as substrate only a trace activity is detectable, and is inactive with glutamate. Plays a key role in the catabolism of D-arginine and D-lysine, that allows P.taetrolens strain NBRC 3460 to grow on these basic D-amino acids as a sole carbon source. This is Broad specificity amino-acid racemase from Pseudomonas taetrolens.